The chain runs to 387 residues: Succinate--CoA ligase [ADP-forming] subunit beta (387 aa).

An ATP-grasp domain is found at 9-244 (KALLQRYGVN…WSQDDAKEAE (236 aa)). Residues Lys46, 53–55 (GRG), Glu99, Leu102, and Glu107 each bind ATP. Mg(2+)-binding residues include Asn199 and Asp213. Residues Asn264 and 321–323 (GIM) each bind substrate.

This sequence belongs to the succinate/malate CoA ligase beta subunit family. In terms of assembly, heterotetramer of two alpha and two beta subunits. Mg(2+) is required as a cofactor.

It catalyses the reaction succinate + ATP + CoA = succinyl-CoA + ADP + phosphate. The enzyme catalyses GTP + succinate + CoA = succinyl-CoA + GDP + phosphate. It functions in the pathway carbohydrate metabolism; tricarboxylic acid cycle; succinate from succinyl-CoA (ligase route): step 1/1. Functionally, succinyl-CoA synthetase functions in the citric acid cycle (TCA), coupling the hydrolysis of succinyl-CoA to the synthesis of either ATP or GTP and thus represents the only step of substrate-level phosphorylation in the TCA. The beta subunit provides nucleotide specificity of the enzyme and binds the substrate succinate, while the binding sites for coenzyme A and phosphate are found in the alpha subunit. The polypeptide is Succinate--CoA ligase [ADP-forming] subunit beta (Methylobacillus flagellatus (strain ATCC 51484 / DSM 6875 / VKM B-1610 / KT)).